Consider the following 446-residue polypeptide: MKFRNNLTLYLIFIIVFTIYISLTISIPLKNGKFWHITDTHYDFMYIEGGDEDKQCREVTYKSKYEKGGASSIGNYKCDTSFELLQSSFEYMVKHEEKPDFIIWTGDDPPHLGNSQLNETLVLQSITNMTNLIKGYFPDIPIFPSIGNHDSYPQHQIGVGPNWLFENVAQLWSPFLSNDSIETFKLGGYYTELVSEGFRIISLNTVFYYNENRQCLNLTDPAGQLLWLNETLANASLAGERVWIIGHVPPGYNEKYDVFNFHKQFNDEYLFSFSQYSDIIEFHIYGHEHTDTFRLFYDDPNDHINDIEPTGIMFLSPSLTPWMNQFLPALPNNPGLRLYEYNITSFALLDYYQFWTNLTDNIISGNIDWQLEYRATEFFNTFNLSPVSMYEAYLLIQSVTSQLLKFHFYNSVSYPTKGCDEICKKIQLCSIRHPFTKGFKECLVEI.

A signal peptide spans 1-26 (MKFRNNLTLYLIFIIVFTIYISLTIS). N-linked (GlcNAc...) asparagine glycosylation occurs at Asn6. Zn(2+) is bound by residues Asp39 and His41. A disulfide bond links Cys56 and Cys78. A Zn(2+)-binding site is contributed by Asp107. N-linked (GlcNAc...) asparagine glycosylation is found at Asn118 and Asn128. Asn148 serves as a coordination point for Zn(2+). N-linked (GlcNAc...) asparagine glycosylation is found at Asn178, Asn217, Asn229, and Asn234. His247, His287, and His289 together coordinate Zn(2+). Asn342 and Asn357 each carry an N-linked (GlcNAc...) asparagine glycan. The cysteines at positions 429 and 442 are disulfide-linked.

The protein belongs to the acid sphingomyelinase family. It depends on Zn(2+) as a cofactor.

It localises to the secreted. This chain is Sphingomyelinase phosphodiesterase C (sgmC), found in Dictyostelium discoideum (Social amoeba).